A 1021-amino-acid chain; its full sequence is Caspase recruitment domain-containing protein 10 (1021 aa).

Positions 1 to 24 are disordered; the sequence is MQGRADAGEADEEAGAGSGSEAEE. Ser-18 is subject to Phosphoserine. The 93-residue stretch at 23–115 folds into the CARD domain; sequence EEDALWERIE…EHFTLLTGQE (93 aa). Residues 138–450 are a coiled coil; the sequence is TEVRRLREAR…LEAQLQRTQG (313 aa). Disordered stretches follow at residues 475–544, 597–616, and 790–809; these read EFPS…MSDI, SPPA…PGLG, and LVRP…QLPA. Composition is skewed to basic and acidic residues over residues 495–508 and 525–535; these read HTSE…KEIN and RQREEDPEPPK.

In terms of assembly, CARD10 and BCL10 bind to each other by CARD-CARD interaction. They both participate in a complex with MALT1, where MALT1 binds to BCL10. Interacts with TMEM43; this interaction is essential for EGFR-mediated NF-kappa-B activation. Highly expressed in kidney, heart followed by brain, lung, liver, skeletal muscle and testis.

Functionally, scaffold protein that plays an important role in mediating the activation of NF-kappa-B via BCL10 or EGFR. The chain is Caspase recruitment domain-containing protein 10 (Card10) from Mus musculus (Mouse).